Here is a 141-residue protein sequence, read N- to C-terminus: Hemoglobin subunit alpha-1 (141 aa).

The 141-residue stretch at 1-141 (VLSPADKNNV…VSTVLTSKYR (141 aa)) folds into the Globin domain. His-58 lines the O2 pocket. His-87 is a heme b binding site.

It belongs to the globin family. Heterotetramer of two alpha chains and two beta chains. Red blood cells.

Its function is as follows. Involved in oxygen transport from the lung to the various peripheral tissues. The sequence is that of Hemoglobin subunit alpha-1 from Varecia variegata (Black-and-white ruffed lemur).